The chain runs to 205 residues: Large ribosomal subunit protein uL3c (205 aa).

The tract at residues 130 to 150 (RGPMSHGSKNHRQPGSIGAGT) is disordered.

It belongs to the universal ribosomal protein uL3 family. Part of the 50S ribosomal subunit.

It localises to the plastid. It is found in the chloroplast. Its function is as follows. One of the primary rRNA binding proteins, it binds directly near the 3'-end of the 23S rRNA, where it nucleates assembly of the 50S subunit. This chain is Large ribosomal subunit protein uL3c (rpl3), found in Gracilaria tenuistipitata var. liui (Red alga).